Here is a 901-residue protein sequence, read N- to C-terminus: DNA mismatch repair protein MutS (901 aa).

The segment covering methionine 1–serine 12 has biased composition (polar residues). The interval methionine 1–proline 25 is disordered. Glycine 679–serine 686 is an ATP binding site.

The protein belongs to the DNA mismatch repair MutS family.

In terms of biological role, this protein is involved in the repair of mismatches in DNA. It is possible that it carries out the mismatch recognition step. This protein has a weak ATPase activity. This chain is DNA mismatch repair protein MutS, found in Trichodesmium erythraeum (strain IMS101).